A 532-amino-acid chain; its full sequence is E3 ubiquitin-protein ligase ICP0 (532 aa).

Cys-8, Cys-11, Cys-24, His-26, Cys-29, Cys-32, Cys-43, and Cys-46 together coordinate Zn(2+). The RING-type zinc-finger motif lies at 8 to 47 (CPICLEDPSNYSMALPCLHAFCYVCITRWIRQNPTCPLCK). 4 disordered regions span residues 206–391 (EYID…PMRP), 406–426 (APRD…AGPR), 461–498 (EDES…IRQG), and 510–532 (QTQP…RRNQ). 2 stretches are compositionally biased toward acidic residues: residues 217–227 (SEEETDSDIEV) and 234–243 (DPEDTSDETS). Residues 286 to 295 (RSARLRRRQP) are compositionally biased toward basic residues.

Post-translationally, auto-ubiquitinated.

It carries out the reaction S-ubiquitinyl-[E2 ubiquitin-conjugating enzyme]-L-cysteine + [acceptor protein]-L-lysine = [E2 ubiquitin-conjugating enzyme]-L-cysteine + N(6)-ubiquitinyl-[acceptor protein]-L-lysine.. Functionally, evades nuclear antiviral defenses triggered by dsDNA viruses. Acts during the initial stages of lytic infection and the reactivation of latent viral genome. Prevents the antiviral effect of nuclear bodies by degrading host PML and SP100. In Equus caballus (Horse), this protein is E3 ubiquitin-protein ligase ICP0 (63).